We begin with the raw amino-acid sequence, 361 residues long: S-adenosylmethionine decarboxylase proenzyme (361 aa).

Residues Glu-13 and Glu-16 contribute to the active site. Catalysis depends on Ser-73, which acts as the Schiff-base intermediate with substrate; via pyruvic acid. The residue at position 73 (Ser-73) is a Pyruvic acid (Ser); by autocatalysis. Cys-87 serves as the catalytic Proton donor; for catalytic activity. Catalysis depends on proton acceptor; for processing activity residues Ser-236 and His-249.

The protein belongs to the eukaryotic AdoMetDC family. Pyruvate serves as cofactor. Post-translationally, is synthesized initially as an inactive proenzyme. Formation of the active enzyme involves a self-maturation process in which the active site pyruvoyl group is generated from an internal serine residue via an autocatalytic post-translational modification. Two non-identical subunits are generated from the proenzyme in this reaction, and the pyruvate is formed at the N-terminus of the alpha chain, which is derived from the carboxyl end of the proenzyme. The post-translation cleavage follows an unusual pathway, termed non-hydrolytic serinolysis, in which the side chain hydroxyl group of the serine supplies its oxygen atom to form the C-terminus of the beta chain, while the remainder of the serine residue undergoes an oxidative deamination to produce ammonia and the pyruvoyl group blocking the N-terminus of the alpha chain.

It catalyses the reaction S-adenosyl-L-methionine + H(+) = S-adenosyl 3-(methylsulfanyl)propylamine + CO2. It functions in the pathway amine and polyamine biosynthesis; S-adenosylmethioninamine biosynthesis; S-adenosylmethioninamine from S-adenosyl-L-methionine: step 1/1. This Nicotiana sylvestris (Wood tobacco) protein is S-adenosylmethionine decarboxylase proenzyme (SAMDC1).